A 386-amino-acid chain; its full sequence is 4-hydroxy-3-methylbut-2-en-1-yl diphosphate synthase (flavodoxin) (386 aa).

[4Fe-4S] cluster-binding residues include Cys-281, Cys-284, Cys-316, and Glu-323.

The protein belongs to the IspG family. [4Fe-4S] cluster serves as cofactor.

It carries out the reaction (2E)-4-hydroxy-3-methylbut-2-enyl diphosphate + oxidized [flavodoxin] + H2O + 2 H(+) = 2-C-methyl-D-erythritol 2,4-cyclic diphosphate + reduced [flavodoxin]. It participates in isoprenoid biosynthesis; isopentenyl diphosphate biosynthesis via DXP pathway; isopentenyl diphosphate from 1-deoxy-D-xylulose 5-phosphate: step 5/6. Functionally, converts 2C-methyl-D-erythritol 2,4-cyclodiphosphate (ME-2,4cPP) into 1-hydroxy-2-methyl-2-(E)-butenyl 4-diphosphate. The sequence is that of 4-hydroxy-3-methylbut-2-en-1-yl diphosphate synthase (flavodoxin) from Corynebacterium jeikeium (strain K411).